The following is a 152-amino-acid chain: MEDEEVAESWEEAADSGEIDRRLEKKLKITQKESRKSKSPPKVPIVIQDDSLPAGPPPQIRILKRPTSNGVVSSPNSTSRPTLPVKSLAQREAEYAEARKRILGSASPEEEQEKPILDRPTRISQPEDSRQPNNVIRQPLGPDGSQGFKQRR.

Met1 is modified (N-acetylmethionine). The interval 30 to 152 (TQKESRKSKS…DGSQGFKQRR (123 aa)) is disordered. Phosphoserine is present on residues Ser37, Ser39, and Ser51. An SUZ domain is found at 42–107 (KVPIVIQDDS…ARKRILGSAS (66 aa)). The segment covering 66–81 (PTSNGVVSSPNSTSRP) has biased composition (polar residues). The span at 89 to 100 (AQREAEYAEARK) shows a compositional bias: basic and acidic residues. A phosphoserine mark is found at Ser105 and Ser107. Residues 111-152 (EQEKPILDRPTRISQPEDSRQPNNVIRQPLGPDGSQGFKQRR) enclose the SUZ-C domain. The span at 113 to 130 (EKPILDRPTRISQPEDSR) shows a compositional bias: basic and acidic residues.

Belongs to the SZRD1 family.

This is SUZ RNA-binding domain-containing (SZRD1) from Homo sapiens (Human).